The following is a 192-amino-acid chain: Interleukin-18 (192 aa).

Positions M1–D35 are excised as a propeptide.

It belongs to the IL-1 family. In terms of assembly, forms a ternary complex with ligand-binding receptor subunit IL18R1 and signaling receptor subunit IL18RAP at the plasma membrane. Mature IL18 first binds to IL18R1 forming a low affinity binary complex, which then interacts with IL18RAP to form a high affinity ternary complex that signals inside the cell. Interacts with cargo receptor TMED10; the interaction mediates the translocation from the cytoplasm into the ERGIC (endoplasmic reticulum-Golgi intermediate compartment) and thereby secretion. Post-translationally, the pro-IL-18 precursor is processed by CASP1, CASP4 or CASP5 to yield its mature, active form. The pro-IL-18 precursor features autoinhibitory interactions between the propeptide and the post-cleavage-site region, preventing recognition by the IL18R1 receptor. Processing by CASP1, CASP4 or CASP5 induces conformational changes to generate critical receptor-binding sites. The mature form is then secreted and released in the extracellular milieu by passing through the gasdermin-D (GSDMD) pore. In contrast, cleavage by CASP3 inactivates IL18.

It localises to the cytoplasm. It is found in the cytosol. The protein resides in the secreted. In terms of biological role, pro-inflammatory cytokine primarily involved in epithelial barrier repair, polarized T-helper 1 (Th1) cell and natural killer (NK) cell immune responses. Upon binding to IL18R1 and IL18RAP, forms a signaling ternary complex which activates NF-kappa-B, triggering synthesis of inflammatory mediators. Synergizes with IL12/interleukin-12 to induce IFNG synthesis from T-helper 1 (Th1) cells and natural killer (NK) cells. Involved in transduction of inflammation downstream of pyroptosis: its mature form is specifically released in the extracellular milieu by passing through the gasdermin-D (GSDMD) pore. This is Interleukin-18 (IL18) from Felis catus (Cat).